The primary structure comprises 486 residues: Glutamate--tRNA ligase (486 aa).

Positions 11–21 (PSPTGVVHIGN) match the 'HIGH' region motif. Residues 255–259 (KLSKR) carry the 'KMSKS' region motif. Residue Lys-258 participates in ATP binding.

It belongs to the class-I aminoacyl-tRNA synthetase family. Glutamate--tRNA ligase type 1 subfamily. Monomer.

It localises to the cytoplasm. It carries out the reaction tRNA(Glu) + L-glutamate + ATP = L-glutamyl-tRNA(Glu) + AMP + diphosphate. Functionally, catalyzes the attachment of glutamate to tRNA(Glu) in a two-step reaction: glutamate is first activated by ATP to form Glu-AMP and then transferred to the acceptor end of tRNA(Glu). The polypeptide is Glutamate--tRNA ligase (Streptococcus pneumoniae (strain CGSP14)).